Consider the following 199-residue polypeptide: Insertion sequence IS21-like putative ATP-binding protein (199 aa).

Residue 114–121 (GDSGTGKT) coordinates ATP.

It belongs to the IS21/IS1162 putative ATP-binding protein family.

The polypeptide is Insertion sequence IS21-like putative ATP-binding protein (tnpB) (Bacteroides fragilis (strain YCH46)).